Here is a 320-residue protein sequence, read N- to C-terminus: MQNRNTFSWVKEQMTRFISVSIMIYVITRTSIANAYPIFAQQGYENPREATGRIVCANCHLANKPVDIEVPQAVLPDTVFEAVVRIPYDKQLKQVLANGKKGSLNVGAVLILPEGFELAPPDRISPEMKEKMGNLAFQSYRPTKKNIIVIGPVPGQKYSEIVFPILSPDPATKKDVHFLKYPIYVGGNRGRGQIYPDGSKSNNTVYNATAAGVVSRILRKEKGGYEITIADASDGHQVVDIIPPGPELLVSEGESIKLDQPLTSNPNVGGFGQGDAEIVLQDPLRVQGLLFFLASVILAQIFLVLKKKQFEKVQLYEMNF.

Positions 1–35 (MQNRNTFSWVKEQMTRFISVSIMIYVITRTSIANA) are cleaved as a signal peptide. Heme contacts are provided by Y36, C56, C59, and H60. Residues 286-306 (VQGLLFFLASVILAQIFLVLK) traverse the membrane as a helical segment.

This sequence belongs to the cytochrome f family. In terms of assembly, the 4 large subunits of the cytochrome b6-f complex are cytochrome b6, subunit IV (17 kDa polypeptide, petD), cytochrome f and the Rieske protein, while the 4 small subunits are PetG, PetL, PetM and PetN. The complex functions as a dimer. The cofactor is heme.

The protein localises to the plastid. The protein resides in the chloroplast thylakoid membrane. In terms of biological role, component of the cytochrome b6-f complex, which mediates electron transfer between photosystem II (PSII) and photosystem I (PSI), cyclic electron flow around PSI, and state transitions. The polypeptide is Cytochrome f (Acorus calamus (Sweet flag)).